Consider the following 367-residue polypeptide: Biotin--protein ligase 1, chloroplastic (367 aa).

The N-terminal 37 residues, 1 to 37 (MEAVRSTTTLSNFHLLNILVLRSLKPLHRLSFSFSAS), are a transit peptide targeting the chloroplast. In terms of domain architecture, BPL/LPL catalytic spans 105–289 (IITHRFGRFL…KFEKFFDLFM (185 aa)). Biotin is bound by residues 122 to 124 (STH), Gln145, 149 to 151 (RGR), and Lys220.

It belongs to the biotin--protein ligase family. In terms of tissue distribution, expressed in roots, leaves, stems, flowers, siliques and seeds.

Its subcellular location is the plastid. It localises to the chloroplast. The protein resides in the cytoplasm. It is found in the cytosol. The catalysed reaction is apo-[3-methylcrotonoyl-CoA:carbon-dioxide ligase (ADP-forming)] + biotin + ATP = holo-[3-methylcrotonoyl-CoA:carbon-dioxide ligase (ADP-forming)] + AMP + diphosphate + H(+). It catalyses the reaction biotin + L-lysyl-[protein] + ATP = N(6)-biotinyl-L-lysyl-[protein] + AMP + diphosphate + H(+). Functionally, plays a major role in biotin-dependent carboxylase biotinylation. Catalyzes the addition of biotin to the biotin carboxyl carrier protein (BCCP) subunit of acetyl-CoA carboxylase. Can also biotinylate methylcrotonyl-CoA carboxylase. Is responsible for most, if not all, biotin--protein ligase activity in Arabidopsis. Is essential for plant viability and required for ovule development. This is Biotin--protein ligase 1, chloroplastic from Arabidopsis thaliana (Mouse-ear cress).